Reading from the N-terminus, the 75-residue chain is Large ribosomal subunit protein bL28c (75 aa).

This sequence belongs to the bacterial ribosomal protein bL28 family.

It is found in the plastid. Its subcellular location is the chloroplast. This chain is Large ribosomal subunit protein bL28c, found in Cyanidioschyzon merolae (strain NIES-3377 / 10D) (Unicellular red alga).